We begin with the raw amino-acid sequence, 133 residues long: Large-conductance mechanosensitive channel (133 aa).

A run of 2 helical transmembrane segments spans residues Phe10–Gly30 and Gly76–Ile96.

The protein belongs to the MscL family. In terms of assembly, homopentamer.

The protein localises to the cell inner membrane. Functionally, channel that opens in response to stretch forces in the membrane lipid bilayer. May participate in the regulation of osmotic pressure changes within the cell. In Pasteurella multocida (strain Pm70), this protein is Large-conductance mechanosensitive channel.